The primary structure comprises 305 residues: Methionyl-tRNA formyltransferase (305 aa).

Position 111–114 (111–114 (SILP)) interacts with (6S)-5,6,7,8-tetrahydrofolate.

It belongs to the Fmt family.

It carries out the reaction L-methionyl-tRNA(fMet) + (6R)-10-formyltetrahydrofolate = N-formyl-L-methionyl-tRNA(fMet) + (6S)-5,6,7,8-tetrahydrofolate + H(+). In terms of biological role, attaches a formyl group to the free amino group of methionyl-tRNA(fMet). The formyl group appears to play a dual role in the initiator identity of N-formylmethionyl-tRNA by promoting its recognition by IF2 and preventing the misappropriation of this tRNA by the elongation apparatus. This Wolinella succinogenes (strain ATCC 29543 / DSM 1740 / CCUG 13145 / JCM 31913 / LMG 7466 / NCTC 11488 / FDC 602W) (Vibrio succinogenes) protein is Methionyl-tRNA formyltransferase.